The sequence spans 765 residues: Endosialin (765 aa).

Residues 1 to 17 form the signal peptide; the sequence is MLLRLLLAWVAAVPALG. Over 18 to 695 the chain is Extracellular; it reads QVPWTPEPRA…GQSQRDDRWL (678 aa). Residues 30 to 156 enclose the C-type lectin domain; the sequence is GPSSCYALFP…CTLAVDGYLC (127 aa). 6 disulfide bridges follow: cysteine 131–cysteine 147, cysteine 164–cysteine 213, cysteine 203–cysteine 230, cysteine 316–cysteine 326, cysteine 322–cysteine 335, and cysteine 337–cysteine 350. Positions 162-232 constitute a Sushi domain; it reads GACPALPLEV…WSQTGPLCPG (71 aa). The EGF-like; calcium-binding domain occupies 312–351; it reads DTDECQIAGVCQQMCVNYVGGFECYCSEGHELEADGISCS. Threonine 401, threonine 428, threonine 448, threonine 456, threonine 459, and threonine 466 each carry an O-linked (GalNAc...) threonine glycan. Residues serine 467 and serine 470 are each glycosylated (O-linked (GalNAc...) serine). Residue threonine 472 is glycosylated (O-linked (GalNAc...) threonine). An O-linked (GalNAc...) serine glycan is attached at serine 477. Threonine 488, threonine 517, threonine 520, threonine 535, threonine 552, threonine 554, threonine 556, threonine 570, threonine 571, threonine 604, and threonine 613 each carry an O-linked (GalNAc...) threonine glycan. The interval 548–675 is disordered; the sequence is MSPDTHTITY…QLPSVPSTAA (128 aa). Residues 622 to 633 are compositionally biased toward pro residues; sequence PAFPSSPLPPQR. O-linked (GalNAc...) serine glycosylation is found at serine 626 and serine 627. 2 O-linked (GalNAc...) threonine glycosylation sites follow: threonine 635 and threonine 638. The segment covering 635 to 647 has biased composition (polar residues); it reads TNQTSSISPTHSY. Residues serine 639 and serine 640 are each glycosylated (O-linked (GalNAc...) serine). Threonine 644 is a glycosylation site (O-linked (GalNAc...) threonine). Serine 663 carries O-linked (GalNAc...) serine glycosylation. O-linked (GalNAc...) threonine glycosylation occurs at threonine 673. A helical transmembrane segment spans residues 696-716; the sequence is LVALLVPTCVFLVVLLALGIV. At 717–765 the chain is on the cytoplasmic side; the sequence is YCTRCGSHAPNKRITDCYRWVTHAGNKSSTEPMPPRGSLTGVQTCRTSV. Position 754 is a phosphoserine (serine 754).

As to quaternary structure, interacts with PDGFRA; this interaction promotes PDGF receptor signaling pathway. Interacts with integrin beta-1/ITGB1. Interacts with insulin receptor/INSR; this interaction diminishes INSR autophosphorylation. Post-translationally, O-glycosylated by sialylated oligosaccharides. In terms of processing, may be N-glycosylated. As to expression, expressed in cell lines derived from endothelial cells, embryonic fibroblasts and preadipocytes. Expressed in skeletal muscle by a subset of pericytes.

Its subcellular location is the membrane. Cell surface glycoprotein involved in various biological processes including angiogenesis, immune response modulation, and tissue remodeling and repair. Participates in pericyte proliferation through positive modulation of the PDGF receptor signaling pathway. Acts as a scaffold for factor X, triggering allosteric changes and the spatial re-alignment of factor X with the TF-factor VIIa complex, thereby enhancing coagulation activation. Modulates the insulin signaling pathway by interacting with insulin receptor/INSR and by diminishing its capacity to be autophosphorylated in response to insulin. Also regulates LPS-induced inflammatory responses in macrophages by favoring production of proinflammatory cytokines. This chain is Endosialin (Cd248), found in Mus musculus (Mouse).